Reading from the N-terminus, the 313-residue chain is Adhesin MafA 1 (313 aa).

The N-terminal stretch at 1–14 is a signal peptide; that stretch reads MKILLLLIPLVLTA. The N-palmitoyl cysteine moiety is linked to residue cysteine 15. The S-diacylglycerol cysteine moiety is linked to residue cysteine 15. Over residues 282–298 the composition is skewed to polar residues; that stretch reads GDTTAQNRPDFKQNNGK. Residues 282 to 313 form a disordered region; it reads GDTTAQNRPDFKQNNGKNPDVGNEVIRRRKGG.

It belongs to the MafA family.

It is found in the cell outer membrane. The protein is Adhesin MafA 1 (mafA1) of Neisseria meningitidis serogroup C / serotype 2a (strain ATCC 700532 / DSM 15464 / FAM18).